We begin with the raw amino-acid sequence, 270 residues long: 4-hydroxy-tetrahydrodipicolinate reductase (270 aa).

Residues Gly9 to Met14 and Glu35 contribute to the NAD(+) site. Residue Arg36 coordinates NADP(+). NAD(+)-binding positions include Gly99–Thr101 and Ala123–Phe126. His156 (proton donor/acceptor) is an active-site residue. Residue His157 coordinates (S)-2,3,4,5-tetrahydrodipicolinate. Lys160 acts as the Proton donor in catalysis. Gly166 to Thr167 is a binding site for (S)-2,3,4,5-tetrahydrodipicolinate.

Belongs to the DapB family.

Its subcellular location is the cytoplasm. It catalyses the reaction (S)-2,3,4,5-tetrahydrodipicolinate + NAD(+) + H2O = (2S,4S)-4-hydroxy-2,3,4,5-tetrahydrodipicolinate + NADH + H(+). The enzyme catalyses (S)-2,3,4,5-tetrahydrodipicolinate + NADP(+) + H2O = (2S,4S)-4-hydroxy-2,3,4,5-tetrahydrodipicolinate + NADPH + H(+). It participates in amino-acid biosynthesis; L-lysine biosynthesis via DAP pathway; (S)-tetrahydrodipicolinate from L-aspartate: step 4/4. In terms of biological role, catalyzes the conversion of 4-hydroxy-tetrahydrodipicolinate (HTPA) to tetrahydrodipicolinate. The protein is 4-hydroxy-tetrahydrodipicolinate reductase of Haemophilus influenzae (strain 86-028NP).